The primary structure comprises 365 residues: Alanine racemase (365 aa).

The Proton acceptor; specific for D-alanine role is filled by lysine 35. Lysine 35 carries the N6-(pyridoxal phosphate)lysine modification. A substrate-binding site is contributed by arginine 130. Tyrosine 256 (proton acceptor; specific for L-alanine) is an active-site residue. Position 304 (methionine 304) interacts with substrate.

Belongs to the alanine racemase family. Pyridoxal 5'-phosphate serves as cofactor.

It catalyses the reaction L-alanine = D-alanine. Its pathway is amino-acid biosynthesis; D-alanine biosynthesis; D-alanine from L-alanine: step 1/1. In terms of biological role, catalyzes the interconversion of L-alanine and D-alanine. May also act on other amino acids. This is Alanine racemase (alr) from Polaromonas naphthalenivorans (strain CJ2).